We begin with the raw amino-acid sequence, 236 residues long: Large ribosomal subunit protein uL1 (236 aa).

It belongs to the universal ribosomal protein uL1 family. Part of the 50S ribosomal subunit.

Functionally, binds directly to 23S rRNA. The L1 stalk is quite mobile in the ribosome, and is involved in E site tRNA release. Protein L1 is also a translational repressor protein, it controls the translation of the L11 operon by binding to its mRNA. The chain is Large ribosomal subunit protein uL1 from Corynebacterium glutamicum (strain R).